Here is a 176-residue protein sequence, read N- to C-terminus: Ribosome rescue factor SmrB (176 aa).

The 76-residue stretch at 93 to 168 folds into the Smr domain; that stretch reads LDLHGYRQSE…GDAALLVLID (76 aa).

It belongs to the SmrB family. In terms of assembly, associates with collided ribosomes, but not with correctly translating polysomes.

Functionally, acts as a ribosome collision sensor. Detects stalled/collided disomes (pairs of ribosomes where the leading ribosome is stalled and a second ribosome has collided with it) and endonucleolytically cleaves mRNA at the 5' boundary of the stalled ribosome. Stalled/collided disomes form a new interface (primarily via the 30S subunits) that binds SmrB. Cleaved mRNA becomes available for tmRNA ligation, leading to ribosomal subunit dissociation and rescue of stalled ribosomes. The chain is Ribosome rescue factor SmrB from Shewanella baltica (strain OS223).